A 130-amino-acid polypeptide reads, in one-letter code: MAKPIRKIGLRKGKRKIPKGVIHIQASFNNTIVTVTDIRGQVVSWSSAGACGFKGTRKSTPFAAQTAAENAIRTLIDQGMKQAEVMISGPGPGRETALRAIRRSGVVLSFVRDVTPMPHNGCRPPKKRRV.

Belongs to the universal ribosomal protein uS11 family. In terms of assembly, part of the 30S ribosomal subunit.

It is found in the plastid. It localises to the chloroplast. The sequence is that of Small ribosomal subunit protein uS11c from Angiopteris evecta (Mule's foot fern).